A 658-amino-acid chain; its full sequence is NUAK family SNF1-like kinase 1 (658 aa).

N-acetylmethionine is present on methionine 1. Residues methionine 1–lysine 53 are disordered. Serine 22 is modified (phosphoserine). The span at proline 40–lysine 53 shows a compositional bias: basic residues. Residues tyrosine 56–valine 307 enclose the Protein kinase domain. Residues leucine 62–valine 70 and lysine 85 contribute to the ATP site. Catalysis depends on aspartate 179, which acts as the Proton acceptor. Threonine 212 is modified (phosphothreonine; by LKB1). 2 disordered regions span residues leucine 353 to valine 422 and isoleucine 441 to arginine 568. Residues phenylalanine 378–leucine 393 are compositionally biased toward polar residues. Over residues serine 394–arginine 405 the composition is skewed to basic residues. Positions glycine 400 to lysine 403 match the GILK motif motif. Phosphoserine is present on serine 456. Positions serine 519–serine 530 are enriched in basic residues. Low complexity predominate over residues serine 559 to arginine 568. Residue serine 601 is modified to Phosphoserine; by PKB/AKT1.

The protein belongs to the protein kinase superfamily. CAMK Ser/Thr protein kinase family. SNF1 subfamily. Interacts (via GILK motif) with PPP1CB; the interaction is direct and bridges NUAK1 and PPP1R12A. Interacts with CDKN1A. Mg(2+) serves as cofactor. Post-translationally, phosphorylated at Thr-212 by STK11/LKB1 in complex with STE20-related adapter-alpha (STRADA) pseudo kinase and CAB39. Not dephosphorylated by the myosin PP1 complex when regulating its activity, due to the presence of PPP1R12A, which prevents myosin PP1 from dephosphorylating NUAK1. Phosphorylated by STK38L upon stimulation with IGF1. In terms of processing, ubiquitinated with 'Lys-29'- and 'Lys-33'-linked polyubiquitins which appear to impede LKB1-mediated phosphorylation. Deubiquitinated by USP9X. Expressed in the developing central nervous system, in epidermis, and some other tissues.

It is found in the nucleus. The protein resides in the cytoplasm. The catalysed reaction is L-seryl-[protein] + ATP = O-phospho-L-seryl-[protein] + ADP + H(+). It catalyses the reaction L-threonyl-[protein] + ATP = O-phospho-L-threonyl-[protein] + ADP + H(+). With respect to regulation, activated by phosphorylation on Thr-212. Activated by phosphorylation at Ser-601 AKT1 during glucose starvation; the relevance of such activation in normal cells is however unsure. Functionally, serine/threonine-protein kinase involved in various processes such as cell adhesion, regulation of cell ploidy and senescence, cell proliferation and tumor progression. Phosphorylates ATM, CASP6, LATS1, PPP1R12A and p53/TP53. Acts as a regulator of cellular senescence and cellular ploidy by mediating phosphorylation of 'Ser-464' of LATS1, thereby controlling its stability. Controls cell adhesion by regulating activity of the myosin protein phosphatase 1 (PP1) complex. Acts by mediating phosphorylation of PPP1R12A subunit of myosin PP1: phosphorylated PPP1R12A then interacts with 14-3-3, leading to reduced dephosphorylation of myosin MLC2 by myosin PP1. May be involved in DNA damage response: phosphorylates p53/TP53 at 'Ser-15' and 'Ser-392' and is recruited to the CDKN1A/WAF1 promoter to participate in transcription activation by p53/TP53. May also act as a tumor malignancy-associated factor by promoting tumor invasion and metastasis under regulation and phosphorylation by AKT1. Suppresses Fas-induced apoptosis by mediating phosphorylation of CASP6, thereby suppressing the activation of the caspase and the subsequent cleavage of CFLAR. Regulates UV radiation-induced DNA damage response mediated by CDKN1A. In association with STK11, phosphorylates CDKN1A in response to UV radiation and contributes to its degradation which is necessary for optimal DNA repair. The polypeptide is NUAK family SNF1-like kinase 1 (Nuak1) (Mus musculus (Mouse)).